Consider the following 53-residue polypeptide: UPF0181 protein VC_A0569 (53 aa).

It belongs to the UPF0181 family.

In Vibrio cholerae serotype O1 (strain ATCC 39315 / El Tor Inaba N16961), this protein is UPF0181 protein VC_A0569.